A 427-amino-acid polypeptide reads, in one-letter code: Trigger factor (427 aa).

Positions 163–248 (GDTVVIDFEG…VHEVKAKELP (86 aa)) constitute a PPIase FKBP-type domain.

It belongs to the FKBP-type PPIase family. Tig subfamily.

Its subcellular location is the cytoplasm. It catalyses the reaction [protein]-peptidylproline (omega=180) = [protein]-peptidylproline (omega=0). Its function is as follows. Involved in protein export. Acts as a chaperone by maintaining the newly synthesized protein in an open conformation. Functions as a peptidyl-prolyl cis-trans isomerase. The protein is Trigger factor of Enterococcus faecalis (strain ATCC 700802 / V583).